The chain runs to 451 residues: Trigger factor (451 aa).

The PPIase FKBP-type domain occupies 165–250 (DDKLTIDFEG…LHQIQAREAL (86 aa)).

The protein belongs to the FKBP-type PPIase family. Tig subfamily.

The protein resides in the cytoplasm. The enzyme catalyses [protein]-peptidylproline (omega=180) = [protein]-peptidylproline (omega=0). Its function is as follows. Involved in protein export. Acts as a chaperone by maintaining the newly synthesized protein in an open conformation. Functions as a peptidyl-prolyl cis-trans isomerase. This chain is Trigger factor, found in Helicobacter pylori (strain HPAG1).